The primary structure comprises 254 residues: Pyrroloquinoline-quinone synthase (254 aa).

Belongs to the PqqC family.

The enzyme catalyses 6-(2-amino-2-carboxyethyl)-7,8-dioxo-1,2,3,4,7,8-hexahydroquinoline-2,4-dicarboxylate + 3 O2 = pyrroloquinoline quinone + 2 H2O2 + 2 H2O + H(+). The protein operates within cofactor biosynthesis; pyrroloquinoline quinone biosynthesis. In terms of biological role, ring cyclization and eight-electron oxidation of 3a-(2-amino-2-carboxyethyl)-4,5-dioxo-4,5,6,7,8,9-hexahydroquinoline-7,9-dicarboxylic-acid to PQQ. The protein is Pyrroloquinoline-quinone synthase of Rhodopseudomonas palustris (strain TIE-1).